Here is a 499-residue protein sequence, read N- to C-terminus: Lysine--tRNA ligase (499 aa).

Residues glutamate 408 and glutamate 415 each coordinate Mg(2+).

It belongs to the class-II aminoacyl-tRNA synthetase family. Homodimer. The cofactor is Mg(2+).

It is found in the cytoplasm. The catalysed reaction is tRNA(Lys) + L-lysine + ATP = L-lysyl-tRNA(Lys) + AMP + diphosphate. The polypeptide is Lysine--tRNA ligase (Bacillus cereus (strain ATCC 10987 / NRS 248)).